Reading from the N-terminus, the 28-residue chain is Cytochrome b6-f complex subunit 6 (28 aa).

A helical transmembrane segment spans residues Val2 to Leu22.

It belongs to the PetL family. As to quaternary structure, the 4 large subunits of the cytochrome b6-f complex are cytochrome b6, subunit IV (17 kDa polypeptide, PetD), cytochrome f and the Rieske protein, while the 4 small subunits are PetG, PetL, PetM and PetN. The complex functions as a dimer.

It localises to the plastid. Its subcellular location is the cyanelle thylakoid membrane. In terms of biological role, component of the cytochrome b6-f complex, which mediates electron transfer between photosystem II (PSII) and photosystem I (PSI), cyclic electron flow around PSI, and state transitions. PetL is important for photoautotrophic growth as well as for electron transfer efficiency and stability of the cytochrome b6-f complex. This is Cytochrome b6-f complex subunit 6 from Cyanophora paradoxa.